The chain runs to 366 residues: MTLIRLLACLLFLPCLAQAGAVRLKDLVEFDGVRGNDLVGYGLVVGLNGTGDGLRNAPFTEEIMSNILERLGVNVTGEDFRPKNVAAVFVTAALPPFARVGSQIDITVSAIGDSKSLLGGTLIMTPLNAADGQIYAVAQGTVLAGGASAEGQAASVVQGVPTSGVIPAGARVEREIEFDLGSLTQLRLALREPDFTTAGRIETAVNSAFNGRVAVMRDSGTVELDIAATQARSPAHVIGRIENILVEPERKARVVVDQRSGTIVMGADVRISRVAVSQGSLTLRVEEAPIAVQPNPFADGDTVVVPRTNAEIEQEPGIKLAEVPESASLSDVVAGLNALGVSPRDMIDILKTIKAAGALHAEFVVR.

The N-terminal stretch at 1-19 (MTLIRLLACLLFLPCLAQA) is a signal peptide.

It belongs to the FlgI family. As to quaternary structure, the basal body constitutes a major portion of the flagellar organelle and consists of four rings (L,P,S, and M) mounted on a central rod.

Its subcellular location is the periplasm. It is found in the bacterial flagellum basal body. Its function is as follows. Assembles around the rod to form the L-ring and probably protects the motor/basal body from shearing forces during rotation. The protein is Flagellar P-ring protein of Ruegeria pomeroyi (strain ATCC 700808 / DSM 15171 / DSS-3) (Silicibacter pomeroyi).